The sequence spans 149 residues: UPF0306 protein PM1958 (149 aa).

The protein belongs to the UPF0306 family.

The chain is UPF0306 protein PM1958 from Pasteurella multocida (strain Pm70).